A 232-amino-acid chain; its full sequence is uncharacterized protein (232 aa).

A compositionally biased stretch (basic and acidic residues) spans 86–95 (RGLPRPEFKA). The segment at 86–107 (RGLPRPEFKANGHPSMDAEADD) is disordered.

This is an uncharacterized protein from Sinorhizobium fredii (strain NBRC 101917 / NGR234).